A 383-amino-acid polypeptide reads, in one-letter code: Lipoyl synthase, mitochondrial (383 aa).

Positions 25 to 34 are enriched in polar residues; the sequence is STPSLLQTLD. Positions 25–44 are disordered; sequence STPSLLQTLDPSVPSPPAAG. C110, C115, C121, C141, C145, C148, and S357 together coordinate [4Fe-4S] cluster. In terms of domain architecture, Radical SAM core spans 126–346; the sequence is ETGTATATIM…RALGVEMGFR (221 aa).

Belongs to the radical SAM superfamily. Lipoyl synthase family. [4Fe-4S] cluster serves as cofactor.

The protein localises to the mitochondrion. The enzyme catalyses [[Fe-S] cluster scaffold protein carrying a second [4Fe-4S](2+) cluster] + N(6)-octanoyl-L-lysyl-[protein] + 2 oxidized [2Fe-2S]-[ferredoxin] + 2 S-adenosyl-L-methionine + 4 H(+) = [[Fe-S] cluster scaffold protein] + N(6)-[(R)-dihydrolipoyl]-L-lysyl-[protein] + 4 Fe(3+) + 2 hydrogen sulfide + 2 5'-deoxyadenosine + 2 L-methionine + 2 reduced [2Fe-2S]-[ferredoxin]. It participates in protein modification; protein lipoylation via endogenous pathway; protein N(6)-(lipoyl)lysine from octanoyl-[acyl-carrier-protein]: step 2/2. Its function is as follows. Catalyzes the radical-mediated insertion of two sulfur atoms into the C-6 and C-8 positions of the octanoyl moiety bound to the lipoyl domains of lipoate-dependent enzymes, thereby converting the octanoylated domains into lipoylated derivatives. The protein is Lipoyl synthase, mitochondrial of Zea mays (Maize).